The sequence spans 861 residues: DNA mismatch repair protein MutS (861 aa).

616–623 (GPNMGGKS) is an ATP binding site.

The protein belongs to the DNA mismatch repair MutS family.

In terms of biological role, this protein is involved in the repair of mismatches in DNA. It is possible that it carries out the mismatch recognition step. This protein has a weak ATPase activity. The polypeptide is DNA mismatch repair protein MutS (Haemophilus influenzae (strain PittEE)).